Here is a 339-residue protein sequence, read N- to C-terminus: Fructose-1,6-bisphosphatase, cytosolic (339 aa).

Residues Glu-71, Glu-100, Asp-121, Leu-123, and Asp-124 each contribute to the Mg(2+) site. Substrate is bound by residues 124–127 (DGSS), Asn-215, Tyr-247, Tyr-267, and Lys-277. Residue Glu-283 participates in Mg(2+) binding.

This sequence belongs to the FBPase class 1 family. The cofactor is Mg(2+).

It is found in the cytoplasm. It catalyses the reaction beta-D-fructose 1,6-bisphosphate + H2O = beta-D-fructose 6-phosphate + phosphate. The protein is Fructose-1,6-bisphosphatase, cytosolic of Oryza sativa subsp. indica (Rice).